Here is a 350-residue protein sequence, read N- to C-terminus: Beta-ketoacyl-[acyl-carrier-protein] synthase III (350 aa).

Residues Cys120 and His256 contribute to the active site. An ACP-binding region spans residues 257–261 (QANVR). Asn286 is an active-site residue.

The protein belongs to the thiolase-like superfamily. FabH family. Homodimer.

The protein localises to the cytoplasm. The enzyme catalyses malonyl-[ACP] + acetyl-CoA + H(+) = 3-oxobutanoyl-[ACP] + CO2 + CoA. It participates in lipid metabolism; fatty acid biosynthesis. Functionally, catalyzes the condensation reaction of fatty acid synthesis by the addition to an acyl acceptor of two carbons from malonyl-ACP. Catalyzes the first condensation reaction which initiates fatty acid synthesis and may therefore play a role in governing the total rate of fatty acid production. Possesses both acetoacetyl-ACP synthase and acetyl transacylase activities. Its substrate specificity determines the biosynthesis of branched-chain and/or straight-chain of fatty acids. This is Beta-ketoacyl-[acyl-carrier-protein] synthase III from Deinococcus deserti (strain DSM 17065 / CIP 109153 / LMG 22923 / VCD115).